The sequence spans 484 residues: Hexokinase-1 (484 aa).

The region spanning 25-465 (KTLQDHLDEL…SGVGAALVSA (441 aa)) is the Hexokinase domain. The hexokinase small subdomain stretch occupies residues 79–212 (DGNEHGSYLA…CNNVRLNAIL (134 aa)). Position 90–95 (90–95 (DLGGTN)) interacts with ATP. Residues 160 to 161 (SY), 177 to 178 (TK), and 213 to 214 (SD) contribute to the substrate site. Positions 213 to 454 (SDTTGTLVAS…SKVVTIPAED (242 aa)) are hexokinase large subdomain. Position 237 (threonine 237) interacts with ATP. Substrate contacts are provided by asparagine 240, glutamate 269, and glutamate 302. Residues 307–308 (GC), 344–348 (TSVLS), and 419–423 (SVYNL) each bind ATP.

The protein belongs to the hexokinase family. Monomer.

It catalyses the reaction a D-hexose + ATP = a D-hexose 6-phosphate + ADP + H(+). The enzyme catalyses D-mannose + ATP = D-mannose 6-phosphate + ADP + H(+). The catalysed reaction is D-fructose + ATP = D-fructose 6-phosphate + ADP + H(+). It carries out the reaction D-glucose + ATP = D-glucose 6-phosphate + ADP + H(+). It functions in the pathway carbohydrate metabolism; hexose metabolism. The protein operates within carbohydrate degradation; glycolysis; D-glyceraldehyde 3-phosphate and glycerone phosphate from D-glucose: step 1/4. Catalyzes the phosphorylation of hexose (six-carbon sugars) to hexose 6-phosphate. Phosphorylates D-fructose, D-mannose and, to a lower extent, D-glucose. Compared to hxk2, has low affinity for D-glucose. The chain is Hexokinase-1 from Schizosaccharomyces pombe (strain 972 / ATCC 24843) (Fission yeast).